We begin with the raw amino-acid sequence, 83 residues long: Exodeoxyribonuclease 7 small subunit (83 aa).

This sequence belongs to the XseB family. As to quaternary structure, heterooligomer composed of large and small subunits.

Its subcellular location is the cytoplasm. The enzyme catalyses Exonucleolytic cleavage in either 5'- to 3'- or 3'- to 5'-direction to yield nucleoside 5'-phosphates.. In terms of biological role, bidirectionally degrades single-stranded DNA into large acid-insoluble oligonucleotides, which are then degraded further into small acid-soluble oligonucleotides. The polypeptide is Exodeoxyribonuclease 7 small subunit (Rhizobium leguminosarum bv. trifolii (strain WSM2304)).